The primary structure comprises 302 residues: Protein FLOURY 1 (302 aa).

2 consecutive transmembrane segments (helical) span residues 27-47 (SAGA…VAVL) and 82-102 (LAGS…FLAV). The tract at residues 160–195 (SSKPVSRSLAAEFDQEADGEEEDNAGETSDPDDGSV) is disordered. Residues 172 to 192 (FDQEADGEEEDNAGETSDPDD) are compositionally biased toward acidic residues. Positions 193–299 (GSVQYLRRRL…ALSETSEDDR (107 aa)) constitute a GTD-binding domain. Residues 199–254 (RRRLKEEMLLKEVALEELEKERHAAASAADEAMSKIACLRSEKALVEREARQFQEM) are a coiled coil. Residues 283 to 302 (PEAITDRALSETSEDDRDKK) are disordered.

In terms of assembly, interacts (via C-terminus) with both 22 kDa and 19 kDa alpha-zeins. Interacts (via C-terminus) with OP10 (via N-terminus). In terms of tissue distribution, expressed in endosperm. Not detected in embryo, leaves and roots.

Its subcellular location is the endoplasmic reticulum membrane. Functionally, involved in protein body development and 22 kDa alpha-zein localization. The sequence is that of Protein FLOURY 1 from Zea mays (Maize).